The following is a 332-amino-acid chain: MSTEIPSLSASYANSFKIGAAVHTRMLQTEGEFIAKHYNSVTAENQMKFEEVHPREHEYTFEAADEIVDFAVARGIGVRGHTLVWHNQTPAWMFEDASGGTASREMMLSRLKQHIDTVVGRYKDQIYAWDVVNEAIEDKTDLIMRDTKWLRLLGEDYLVQAFNMAHEADPNALLFYNDYNETDPVKREKIYNLVRSLLDQGAPVHGIGMQGHWNIHGPSMDEIRQAIERYASLDVQLHVTELDLSVFRHEDQRTDLTEPTAEMAELQQKRYEDIFGLFREYRSNITSVTFWGVADNYTWLDNFPVRGRKNWPFVFDTELQPKDSFWRIIGQD.

A GH10 domain is found at 2 to 331 (STEIPSLSAS…KDSFWRIIGQ (330 aa)). Glutamate 134 acts as the Proton donor in catalysis. The active-site Nucleophile is the glutamate 241.

The protein belongs to the glycosyl hydrolase 10 (cellulase F) family. Cytoplasmic xylanase subfamily.

The protein localises to the cytoplasm. The catalysed reaction is Endohydrolysis of (1-&gt;4)-beta-D-xylosidic linkages in xylans.. Its pathway is glycan degradation; xylan degradation. Its activity is regulated as follows. Completely inhibited by Ag(2+), Cu(2+), Hg(2+), Mn(2+), Pb(2+) and Sn(2+). Strongly inhibited by Fe(2+) and Zn(2+). Co(2+) and Ni(2+) cause little inhibition while Ca(2+) and Mg(2+) do not affect enzyme activity, and Ba(2+) produces a small stimulating effect. Irreversibly inactivated by SDS in vitro. In terms of biological role, plays a role in plant xylan biodegradation, probably via the hydrolysis of short xylooligosaccharides resulting from extracellular xylan hydrolysis, once they have been transported inside cells. Shows similar activity on xylans of different rate of arabinose or methylglucuronic substitution. Also displays high activity on aryl-xylosides. Is active on xylotetraose and xylotriose, but does not hydrolyze xylobiose, indicating that XynB is a xylanase and not a beta-xylosidase. The protein is Endo-1,4-beta-xylanase B (xynB) of Paenibacillus barcinonensis.